The primary structure comprises 428 residues: Zinc metalloproteinase nas-27 (428 aa).

A signal peptide spans 1 to 17; the sequence is MQILPIFFPLLITSLHA. The propeptide occupies 18–57; the sequence is IPRGRRAVRNRNEGDINSLVGVGQYLYQGDIAVVKSRARR. Positions 58–255 constitute a Peptidase M12A domain; sequence AVIRQKHKKW…SRMNVLYNCH (198 aa). 6 disulfide bridges follow: Cys-99–Cys-254, Cys-120–Cys-141, Cys-258–Cys-276, Cys-281–Cys-290, Cys-306–Cys-339, and Cys-366–Cys-386. A Zn(2+)-binding site is contributed by His-150. Glu-151 is an active-site residue. His-154 and His-160 together coordinate Zn(2+). Residue Asn-181 is glycosylated (N-linked (GlcNAc...) asparagine). The region spanning 250–291 is the EGF-like domain; the sequence is VLYNCHERCANTLNRCQQGGYPAPSDCSQCVCPDGFGGNFCE. A CUB domain is found at 306–428; it reads CGGVLWASET…LDFNIEYRAV (123 aa). Residue Asn-377 is glycosylated (N-linked (GlcNAc...) asparagine).

Requires Zn(2+) as cofactor.

It localises to the secreted. In terms of biological role, metalloprotease. This Caenorhabditis elegans protein is Zinc metalloproteinase nas-27 (nas-27).